The chain runs to 88 residues: Small ribosomal subunit protein bS20 (88 aa).

This sequence belongs to the bacterial ribosomal protein bS20 family.

Its function is as follows. Binds directly to 16S ribosomal RNA. This chain is Small ribosomal subunit protein bS20, found in Oenococcus oeni (strain ATCC BAA-331 / PSU-1).